A 284-amino-acid chain; its full sequence is HTH-type transcriptional activator RhaR (284 aa).

In terms of domain architecture, HTH araC/xylS-type spans 181–279 (DMLMNALRAS…GVSPSAYRQR (99 aa)). DNA-binding regions (H-T-H motif) lie at residues 198 to 219 (EAFC…KEQT) and 246 to 269 (IGDI…HQAF).

In terms of assembly, binds DNA as a dimer.

It localises to the cytoplasm. Activates expression of the rhaSR operon in response to L-rhamnose. The protein is HTH-type transcriptional activator RhaR of Pectobacterium carotovorum subsp. carotovorum (strain PC1).